Consider the following 336-residue polypeptide: Ribosomal RNA large subunit methyltransferase F (336 aa).

It belongs to the methyltransferase superfamily. METTL16/RlmF family.

The protein localises to the cytoplasm. The enzyme catalyses adenosine(1618) in 23S rRNA + S-adenosyl-L-methionine = N(6)-methyladenosine(1618) in 23S rRNA + S-adenosyl-L-homocysteine + H(+). Specifically methylates the adenine in position 1618 of 23S rRNA. The chain is Ribosomal RNA large subunit methyltransferase F from Yersinia pestis bv. Antiqua (strain Nepal516).